A 526-amino-acid polypeptide reads, in one-letter code: Amine oxidase [flavin-containing] A (526 aa).

The residue at position 1 (M1) is an N-acetylmethionine. The Cytoplasmic segment spans residues 1–497 (MTDLEKPNLA…HTFLERNLPS (497 aa)). S383 carries the phosphoserine modification. C406 carries the post-translational modification S-8alpha-FAD cysteine. Residues 498–518 (VPGLLKITGVSTSVALLCFVL) traverse the membrane as a helical; Anchor for type IV membrane protein segment. The Mitochondrial intermembrane segment spans residues 519–526 (YKIKKLPC). Residues 520–522 (KIK) are interaction with membrane phospholipid headgroups.

Belongs to the flavin monoamine oxidase family. Monomer, homo- or heterodimer (containing two subunits of similar size). Each subunit contains a covalently bound flavin. Enzymatically active as monomer. The cofactor is FAD.

It localises to the mitochondrion outer membrane. It catalyses the reaction a secondary aliphatic amine + O2 + H2O = a primary amine + an aldehyde + H2O2. The catalysed reaction is a primary methyl amine + O2 + H2O = an aldehyde + H2O2 + NH4(+). It carries out the reaction (R)-adrenaline + O2 + H2O = (R)-3,4-dihydroxymandelaldehyde + methylamine + H2O2. The enzyme catalyses dopamine + O2 + H2O = 3,4-dihydroxyphenylacetaldehyde + H2O2 + NH4(+). It catalyses the reaction tyramine + O2 + H2O = (4-hydroxyphenyl)acetaldehyde + H2O2 + NH4(+). The catalysed reaction is (R)-noradrenaline + O2 + H2O = (R)-3,4-dihydroxymandelaldehyde + H2O2 + NH4(+). It carries out the reaction serotonin + O2 + H2O = (5-hydroxyindol-3-yl)acetaldehyde + H2O2 + NH4(+). The enzyme catalyses kynuramine + O2 + H2O = 3-(2-aminophenyl)-3-oxopropanal + H2O2 + NH4(+). It catalyses the reaction tryptamine + O2 + H2O = indole-3-acetaldehyde + H2O2 + NH4(+). The catalysed reaction is 2-phenylethylamine + O2 + H2O = 2-phenylacetaldehyde + H2O2 + NH4(+). Its function is as follows. Catalyzes the oxidative deamination of primary and some secondary amine such as neurotransmitters, with concomitant reduction of oxygen to hydrogen peroxide and has important functions in the metabolism of neuroactive and vasoactive amines in the central nervous system and peripheral tissues. Preferentially oxidizes serotonin. Also catalyzes the oxidative deamination of kynuramine to 3-(2-aminophenyl)-3-oxopropanal that can spontaneously condense to 4-hydroxyquinoline. The sequence is that of Amine oxidase [flavin-containing] A from Rattus norvegicus (Rat).